Reading from the N-terminus, the 354-residue chain is Homer protein homolog 1 (354 aa).

The WH1 domain occupies 1-110 (MGEQPIFSTR…EKFQEFKEAA (110 aa)). Gly2 is modified (N-acetylglycine). The segment at 114–172 (KEKSQEKMELTSTPSQESAGGDLQSPLTPESINGTDDERTPDLTQNSEPRPEPTQNALP) is disordered. 2 stretches are compositionally biased toward polar residues: residues 138 to 147 (SPLTPESING) and 155 to 172 (DLTQ…NALP). A coiled-coil region spans residues 181–352 (KHWEAELATL…LRDNLAKLLE (172 aa)). Residues 290–354 (KLQEVEIRNK…DNLAKLLERS (65 aa)) form a required for tetramerization region. Position 306 is a phosphoserine (Ser306).

Belongs to the Homer family. As to quaternary structure, tetramer; this tetrameric structure is critical for forming the high-order complex with SHANK1, which in turn is necessary for the structural and functional integrity of dendritic spines. Interacts with GRM1, GRM5, ITPR1, DNM3, RYR1, RYR2 and SHANK3. Interacts with IFT57 and OPHN1. Encodes a coiled-coil structure that mediates homo- and heteromultimerization. Interacts with SHANK1; forms high-order polymerized complex with a mesh-like network structure, at least composed of SHANK1, HOMER1 and DLGAP1; the complex formation is SHANK1 multimerization dependent. Interacts with NFATC4. Interacts with DAGLA (via PPXXF motif); this interaction is required for the cell membrane localization of DAGLA. Interacts with SRGAP2.

Its subcellular location is the cytoplasm. The protein resides in the postsynaptic density. It is found in the synapse. The protein localises to the cell projection. It localises to the dendritic spine. Postsynaptic density scaffolding protein. Binds and cross-links cytoplasmic regions of GRM1, GRM5, ITPR1, DNM3, RYR1, RYR2, SHANK1 and SHANK3. By physically linking GRM1 and GRM5 with ER-associated ITPR1 receptors, it aids the coupling of surface receptors to intracellular calcium release. May also couple GRM1 to PI3 kinase through its interaction with AGAP2. Forms a high-order complex with SHANK1, which in turn is necessary for the structural and functional integrity of dendritic spines. Negatively regulates T cell activation by inhibiting the calcineurin-NFAT pathway. Acts by competing with calcineurin/PPP3CA for NFAT protein binding, hence preventing NFAT activation by PPP3CA. The sequence is that of Homer protein homolog 1 from Bos taurus (Bovine).